A 172-amino-acid polypeptide reads, in one-letter code: Lectin (172 aa).

A signal peptide spans 1–20; the sequence is MVWCLADLRAYVLVLLVISG. Positions 36–172 constitute a C-type lectin domain; sequence DCTPGWDCHF…ICKYTTPCRY (137 aa). 2 disulfides stabilise this stretch: cysteine 65/cysteine 164 and cysteine 140/cysteine 156. Asparagine 93 carries N-linked (GlcNAc...) asparagine glycosylation.

Heterodimer. As to expression, anterior part of oviduct.

Its subcellular location is the secreted. Its function is as follows. May be involved in protection of eggs and embryos against microorganisms. Calcium-dependent lectin with specificity to D-glucose and D-glucosamine. Can agglutinate microorganisms in vivo. The protein is Lectin (LEC) of Pleurodeles waltl (Iberian ribbed newt).